Reading from the N-terminus, the 1440-residue chain is Glucose transporter type 1 (1440 aa).

An N-terminal signal peptide occupies residues 1–23 (MAFLCAPGLTFFLTYSIFSAVLG). Residues 24-67 (MLQFGYNTGVINAPEKNIENFMKDVYKDRYGEDISEEFIQQLYS) are Cytoplasmic-facing. A helical transmembrane segment spans residues 68–88 (VAVSIFAIGGMLGGFSGGWMA). Residues 89–95 (NRFGRKG) are Extracellular-facing. The chain crosses the membrane as a helical span at residues 96–116 (GLLLNNVLGIAGACLMGFTKV). Residues 117-127 (SHSYEMLFLGR) are Cytoplasmic-facing. The helical transmembrane segment at 128-148 (FIIGVNCGLNTSLVPMYISEI) threads the bilayer. Residues 149-162 (APLNLRGGLGTVNQ) are Extracellular-facing. Gln162 is a D-glucose binding site. Residues 163–183 (LAVTVGLLLSQVLGIEQILGT) form a helical membrane-spanning segment. Topologically, residues 184-186 (NEG) are cytoplasmic. A helical membrane pass occupies residues 187–207 (WPILLGLAICPAILQLILLPV). Topologically, residues 208–272 (CPESPRYLLI…LICSPTLRPP (65 aa)) are extracellular. Residues 273–293 (LIIGIVMQLSQQFSGINAVFY) traverse the membrane as a helical segment. Residues 283–284 (QQ) and Asn289 each bind D-glucose. Topologically, residues 294-310 (YSTSLFMSSGLTEESAK) are cytoplasmic. The helical transmembrane segment at 311 to 331 (FATIGIGAIMVVMTLVSIPLM) threads the bilayer. Over 332–339 (DRTGRRTL) the chain is Extracellular. Residues 340 to 360 (HLYGLGGMFIFSIFITISFLI) traverse the membrane as a helical segment. Residues 361 to 372 (KEMIDWMSYLSV) are Cytoplasmic-facing. A helical membrane pass occupies residues 373–393 (VATLGFVVFFAVGPGSIPWMI). Trp391 provides a ligand contact to D-glucose. Topologically, residues 394–405 (TAELFSQGPRPS) are extracellular. A helical transmembrane segment spans residues 406 to 426 (AMAIAVLVNWMANFVVGIGFP). Residues 427-429 (SMK) lie on the Cytoplasmic side of the membrane. The helical transmembrane segment at 430-450 (TALENYTFLPFSVFLAIFWIF) threads the bilayer. Residues 451-534 (TYKKVPETKN…GPYPLSDSTN (84 aa)) are Extracellular-facing. Residues Asn460 and Asn480 are each glycosylated (N-linked (GlcNAc...) asparagine). A helical transmembrane segment spans residues 535-555 (LLGPGSSSYGPGGVLGLAGSG). Over 556-1440 (SGLGGQCYTN…RKYTDFLRKK (885 aa)) the chain is Cytoplasmic. Disordered stretches follow at residues 628–708 (ERFL…SRYA), 725–808 (QANP…HSVM), 966–987 (APEG…SELP), 1000–1083 (FLAD…GSYH), 1304–1330 (LEGA…PLTH), and 1380–1401 (ANSP…GHHV). The segment covering 669 to 678 (PPDSASVRST) has biased composition (polar residues). Low complexity predominate over residues 686-704 (QPQQVHHQQQQVHHQQQHQ). The span at 730–739 (QAPPQQPAPP) shows a compositional bias: pro residues. Residues 754–789 (CQQRKHSHSPHHSRHTSPHSHHHHSHHSRHSRRSRR) show a composition bias toward basic residues. Over residues 1313–1330 (STTSEHSSSLPSPQPLTH) the composition is skewed to low complexity.

It belongs to the major facilitator superfamily. Sugar transporter (TC 2.A.1.1) family. Glucose transporter subfamily.

It localises to the membrane. Facilitative glucose transporter. This is Glucose transporter type 1 (Glut1) from Drosophila melanogaster (Fruit fly).